Here is a 321-residue protein sequence, read N- to C-terminus: Cytochrome c biogenesis protein CcsA (321 aa).

Helical transmembrane passes span 17–37, 43–63, 143–163, 225–245, 258–275, and 287–307; these read IISI…IVGI, KGII…WIYS, MLLS…FLVI, VISL…VWAN, ETWA…LHTR, and IVAS…NLLG.

This sequence belongs to the CcmF/CycK/Ccl1/NrfE/CcsA family. In terms of assembly, may interact with Ccs1.

It is found in the plastid. The protein resides in the chloroplast thylakoid membrane. Its function is as follows. Required during biogenesis of c-type cytochromes (cytochrome c6 and cytochrome f) at the step of heme attachment. The chain is Cytochrome c biogenesis protein CcsA from Drimys granadensis.